The primary structure comprises 70 residues: Phycobilisome 8.1 kDa linker polypeptide, phycocyanin-associated, rod (70 aa).

Positions 5–63 constitute a CpcD-like domain; the sequence is SRSFQVEVSGLHQNEVTNQNNYPIRSSGSVFITIPFSRFNEELQRINRLGGKIVNIQPL.

Belongs to the phycobilisome linker protein family.

It localises to the cellular thylakoid membrane. Functionally, rod linker protein, associated with phycocyanin. Linker polypeptides determine the state of aggregation and the location of the disk-shaped phycobiliprotein units within the phycobilisome and modulate their spectroscopic properties in order to mediate a directed and optimal energy transfer. The chain is Phycobilisome 8.1 kDa linker polypeptide, phycocyanin-associated, rod (cpcD3) from Microchaete diplosiphon (Fremyella diplosiphon).